The chain runs to 354 residues: Inactive ADP-ribosyltransferase ARH2 (354 aa).

The residue at position 27 (serine 27) is a Phosphoserine.

The protein belongs to the ADP-ribosylglycohydrolase family.

Its subcellular location is the cytoplasm. It is found in the myofibril. The protein localises to the sarcomere. In terms of biological role, required for myofibril assembly and outgrowth of the cardiac chambers in the developing heart. Appears to be catalytically inactive, showing no activity against O-acetyl-ADP-ribose. The sequence is that of Inactive ADP-ribosyltransferase ARH2 (ADPRHL1) from Pongo abelii (Sumatran orangutan).